A 104-amino-acid polypeptide reads, in one-letter code: Replication restart protein PriB (104 aa).

An SSB domain is found at 1-101 (MTNRLELSGI…LHAEQIELID (101 aa)).

It belongs to the PriB family. In terms of assembly, homodimer. Interacts with DnaT. Interacts with PriA. Component of the replication restart primosome. Primosome assembly occurs via a 'hand-off' mechanism. PriA binds to replication forks, subsequently PriB then DnaT bind; DnaT then displaces ssDNA to generate the helicase loading substrate.

In terms of biological role, involved in the restart of stalled replication forks, which reloads the replicative helicase on sites far from the origin of replication; the PriA-PriB pathway is the major replication restart pathway. During primosome assembly it facilitates complex formation between PriA and DnaT on DNA; stabilizes PriA on DNA. Stimulates the DNA unwinding activity of PriA helicase. Binds single-stranded (ss)DNA at the primosome assembly site (PAS). One study finds it binds 15 nucleotide (nt) ssDNA. Another study finds the minimal ssDNA length for binding to PriB is 25 nt; prefers dT(30) over dA(30). Also binds 22 nt dsDNA. This chain is Replication restart protein PriB, found in Klebsiella pneumoniae subsp. pneumoniae (strain ATCC 700721 / MGH 78578).